Consider the following 68-residue polypeptide: Large ribosomal subunit protein uL29 (68 aa).

Belongs to the universal ribosomal protein uL29 family.

This is Large ribosomal subunit protein uL29 from Limosilactobacillus reuteri (strain DSM 20016) (Lactobacillus reuteri).